The chain runs to 528 residues: Putative pumilio homolog 10 (528 aa).

In terms of domain architecture, PUM-HD spans 188-528; it reads EGSGASYPDE…KIFSKTILKK (341 aa). 8 Pumilio repeats span residues 213 to 248, 249 to 284, 285 to 323, 325 to 360, 361 to 396, 397 to 433, 434 to 465, and 466 to 503; these read EIYGSVNLMARDQIGCRALQKLVEEGTVLDSKVIFL, EIIDHVVELSMDPLGNYIVQKLLVVSDEEQRTMIVS, VLTSKPRELIKICLNTNGTRVIQKMIKTVKTKQQIALVK, ALEPGFLVLVNDSNGYHVLQSCLEFLVPNDNKFVVE, AATEYCAQLATHQYGCYVLQCSLINTVGLQHERLVA, EISRDSLRLSQDPFGNYVVQCLIDQQVSSVNLLLPFR, THCIELATQKFSSHVIEKCLRKYPESRAEIVR, and ELLSYPNFEQLLQDPYANYVIQTALSVTKGAVRARLVE.

Its subcellular location is the cytoplasm. Functionally, sequence-specific RNA-binding protein that regulates translation and mRNA stability by binding the 3'-UTR of target mRNAs. The protein is Putative pumilio homolog 10 (APUM10) of Arabidopsis thaliana (Mouse-ear cress).